Reading from the N-terminus, the 1297-residue chain is Phosphoribosylformylglycinamidine synthase (1297 aa).

The segment at 305-324 (FPGAATGSGGEIRDEGATGR) is disordered. 307–318 (GAATGSGGEIRD) contributes to the ATP binding site. Mg(2+) contacts are provided by Asp-679, Glu-718, Asn-722, and Asp-886. Residue Ser-888 coordinates ATP. Residues 1044–1297 (IAVLREQGVN…LFRNARVFFK (254 aa)) enclose the Glutamine amidotransferase type-1 domain. Cys-1137 (nucleophile) is an active-site residue. Active-site residues include His-1262 and Glu-1264.

This sequence in the N-terminal section; belongs to the FGAMS family. Monomer.

It localises to the cytoplasm. It carries out the reaction N(2)-formyl-N(1)-(5-phospho-beta-D-ribosyl)glycinamide + L-glutamine + ATP + H2O = 2-formamido-N(1)-(5-O-phospho-beta-D-ribosyl)acetamidine + L-glutamate + ADP + phosphate + H(+). The protein operates within purine metabolism; IMP biosynthesis via de novo pathway; 5-amino-1-(5-phospho-D-ribosyl)imidazole from N(2)-formyl-N(1)-(5-phospho-D-ribosyl)glycinamide: step 1/2. Functionally, phosphoribosylformylglycinamidine synthase involved in the purines biosynthetic pathway. Catalyzes the ATP-dependent conversion of formylglycinamide ribonucleotide (FGAR) and glutamine to yield formylglycinamidine ribonucleotide (FGAM) and glutamate. The sequence is that of Phosphoribosylformylglycinamidine synthase from Mannheimia succiniciproducens (strain KCTC 0769BP / MBEL55E).